We begin with the raw amino-acid sequence, 475 residues long: Ankyrin repeat, SAM and basic leucine zipper domain-containing protein 1 (475 aa).

Residues methionine 1 to tryptophan 25 form a disordered region. Residues serine 17, serine 18, and serine 20 each carry the phosphoserine modification. ANK repeat units lie at residues glutamate 45–threonine 74, tyrosine 78–phenylalanine 107, aspartate 110–valine 144, arginine 148–threonine 177, asparagine 181–isoleucine 210, and aspartate 214–glycine 243. An SAM domain is found at serine 272 to glutamate 334.

In terms of assembly, interacts with DDX4, PIWIL1, RANBP9 and TDRD1.

The protein localises to the cytoplasm. Plays a central role during spermatogenesis by repressing transposable elements and preventing their mobilization, which is essential for the germline integrity. Acts via the piRNA metabolic process, which mediates the repression of transposable elements during meiosis by forming complexes composed of piRNAs and Piwi proteins and governs the methylation and subsequent repression of transposons. Its association with pi-bodies suggests a participation in the primary piRNAs metabolic process. Required prior to the pachytene stage to facilitate the production of multiple types of piRNAs, including those associated with repeats involved in the regulation of retrotransposons. May act by mediating protein-protein interactions during germ cell maturation. The chain is Ankyrin repeat, SAM and basic leucine zipper domain-containing protein 1 (ASZ1) from Bos taurus (Bovine).